We begin with the raw amino-acid sequence, 614 residues long: Membrane protein insertase YidC (614 aa).

A helical membrane pass occupies residues 6-26; that stretch reads IVLLIIFSTSLLFLWDAWIKE. Composition is skewed to polar residues over residues 34–48 and 60–70; these read PAITQADSSAGSTQS and ELTSSQASPDT. Residues 34–87 form a disordered region; the sequence is PAITQADSSAGSTQSRNDDSLPVPGSELTSSQASPDTNGIPASGGNGDSVTPRL. The next 4 helical transmembrane spans lie at 380-400, 450-470, 484-504, and 524-544; these read WGVAIILLTMTVKLLFFPLSA, FPILVQIPVFIALYWTILAAV, LSSPDPFYMLPLLMGISMFVQ, and PVAFSAIFFFFPAGLVLYSLV. Residues 562–614 are disordered; it reads TAPSKDTPEPPVSKQVNSSENPETTANSPADSPKQPQTPANNPRKMYKRTRKK. Positions 575-602 are enriched in polar residues; it reads KQVNSSENPETTANSPADSPKQPQTPAN.

The protein belongs to the OXA1/ALB3/YidC family. Type 1 subfamily. In terms of assembly, interacts with the Sec translocase complex via SecD. Specifically interacts with transmembrane segments of nascent integral membrane proteins during membrane integration.

Its subcellular location is the cell inner membrane. In terms of biological role, required for the insertion and/or proper folding and/or complex formation of integral membrane proteins into the membrane. Involved in integration of membrane proteins that insert both dependently and independently of the Sec translocase complex, as well as at least some lipoproteins. Aids folding of multispanning membrane proteins. The polypeptide is Membrane protein insertase YidC (Nitrosomonas europaea (strain ATCC 19718 / CIP 103999 / KCTC 2705 / NBRC 14298)).